The chain runs to 553 residues: Hydroxylamine reductase (553 aa).

Positions 3, 6, 18, and 25 each coordinate [2Fe-2S] cluster. 8 residues coordinate hybrid [4Fe-2O-2S] cluster: H249, E273, C317, C405, C433, C459, E493, and K495. C405 is modified (cysteine persulfide).

The protein belongs to the HCP family. [2Fe-2S] cluster is required as a cofactor. The cofactor is hybrid [4Fe-2O-2S] cluster.

Its subcellular location is the cytoplasm. The enzyme catalyses A + NH4(+) + H2O = hydroxylamine + AH2 + H(+). Catalyzes the reduction of hydroxylamine to form NH(3) and H(2)O. This is Hydroxylamine reductase from Mannheimia succiniciproducens (strain KCTC 0769BP / MBEL55E).